The primary structure comprises 67 residues: Small integral membrane protein 20 (67 aa).

At 1–6 (MSRNLR) the chain is on the mitochondrial matrix side. Residues 7 to 27 (TALIFGGFISLIGAAFYPIYF) form a helical membrane-spanning segment. The Mitochondrial intermembrane portion of the chain corresponds to 28 to 67 (RPLMRLEEYKKEQAINRAGIVQEDVQPPGLKVWSDPFGRK). Phe-64 is subject to Phenylalanine amide.

As to quaternary structure, component of the MITRAC (mitochondrial translation regulation assembly intermediate of cytochrome c oxidase complex) complex, the core components of this complex being COA3/MITRAC12 and COX14. Interacts with COA3/MITRAC12 and COX4I1. Directly interacts with newly synthesized MT-CO1/COX1. As to expression, expressed in the ovary, specifically in granulosa cells of follicles that have passed the primary stage and in oocytes (at protein level).

It is found in the mitochondrion inner membrane. The protein localises to the secreted. In terms of biological role, component of the MITRAC (mitochondrial translation regulation assembly intermediate of cytochrome c oxidase complex) complex, that regulates cytochrome c oxidase assembly. Promotes the progression of complex assembly after the association of MT-CO1/COX1 with COX4I1 and COX6C. Chaperone-like assembly factor required to stabilize newly synthesized MT-CO1/COX1 and to prevent its premature turnover. Functionally, peptide involved in a broad spectrum of regulatory functions. Is a ligand for GPR173. As part of the reproductive cycle, it regulates gonadotropin-releasing hormone (GnRH) signaling in the hypothalamus and pituitary gland which augments the release of luteinizing hormone. Plays a protective role in memory retention through activation of GNRHR. Regulates the secretion of AVP by hypothalamic neurons. Plays a role in the transduction of the itch sensation. Induces anxiolytic effects, reducing behavior associated with anxiety. Regulates food intake as well as satiation and satiety. In the ovary, it regulates follicular growth by stimulating granulosa cell proliferation by increasing the expression of GPR173, CREB1, CYP19A1, KITLG, FSHR, and LHCGR. It also increases the production of estradiol (E2). In the heart, it regulates contractility and relaxation. It also plays a cardioprotective role during ischemia, where it activates the SAFE and RISK pathways. Stimulates the proliferation and differentiation of preadipocytes. In pancreatic islet cells, it induces proliferation of islet cells as well as the production of INS. The protein is Small integral membrane protein 20 (SMIM20) of Homo sapiens (Human).